We begin with the raw amino-acid sequence, 204 residues long: Inositol diphosphatase DSP5 (204 aa).

The 150-residue stretch at 19–168 folds into the Tyrosine-protein phosphatase domain; sequence NFSMVEDEIY…FDVLRLKQCL (150 aa). The tract at residues 75–87 is WPD loop important for active site topology; that stretch reads FGIEGKTDPPTPM. Cys111 acts as the Phosphocysteine intermediate in catalysis.

Belongs to the protein-tyrosine phosphatase family. Atypical dual-specificity phosphatase Siw14-like subfamily. Highly expressed in flowers. Expressed at low levels in roots, leaves, stems and siliques.

It carries out the reaction 5-diphospho-1D-myo-inositol 1,2,3,4,6-pentakisphosphate + H2O = 1D-myo-inositol hexakisphosphate + phosphate + H(+). The catalysed reaction is 1,5-bis(diphospho)-1D-myo-inositol 2,3,4,6-tetrakisphosphate + H2O = 1-diphospho-1D-myo-inositol 2,3,4,5,6-pentakisphosphate + phosphate + 2 H(+). It catalyses the reaction 3,5-bis(diphospho)-1D-myo-inositol 1,2,4,6-tetrakisphosphate + H2O = 3-diphospho-1D-myo-inositol 1,2,4,5,6-pentakisphosphate + phosphate + 2 H(+). The enzyme catalyses 6-diphospho-1D-myo-inositol pentakisphosphate + H2O = 1D-myo-inositol hexakisphosphate + phosphate + H(+). In terms of biological role, cleaves the beta-phosphate at the 5-position of soluble inositol pyrophosphates. Has highest activity on 5-diphosphoinositol 1,2,3,4,6-pentakisphosphate (5-InsP(7)). Possesses low phosphotyrosine phosphatase activity in vitro. Dephosphorylates the phosphoinositides PI(3,5)P2. Hydrolyzes O-methylfluorescein phosphate in vitro. In Arabidopsis thaliana (Mouse-ear cress), this protein is Inositol diphosphatase DSP5.